A 187-amino-acid chain; its full sequence is Large ribosomal subunit protein uL5 (187 aa).

This sequence belongs to the universal ribosomal protein uL5 family. In terms of assembly, part of the 50S ribosomal subunit; part of the 5S rRNA/L5/L18/L25 subcomplex. Contacts the 5S rRNA and the P site tRNA. Forms a bridge to the 30S subunit in the 70S ribosome.

Its function is as follows. This is one of the proteins that bind and probably mediate the attachment of the 5S RNA into the large ribosomal subunit, where it forms part of the central protuberance. In the 70S ribosome it contacts protein S13 of the 30S subunit (bridge B1b), connecting the 2 subunits; this bridge is implicated in subunit movement. Contacts the P site tRNA; the 5S rRNA and some of its associated proteins might help stabilize positioning of ribosome-bound tRNAs. In Dinoroseobacter shibae (strain DSM 16493 / NCIMB 14021 / DFL 12), this protein is Large ribosomal subunit protein uL5.